We begin with the raw amino-acid sequence, 73 residues long: Homeodomain-only protein (73 aa).

Positions 3 to 62 (TEKSVTPTEEQLEILEYNFCKVNKHPDPTTLCLIAAETGLSEEQTLKWFKQRLAEWRKSE) form a DNA-binding region, homeobox; degenerate.

Its subcellular location is the nucleus. The protein localises to the cytoplasm. In terms of biological role, atypical homeodomain protein which does not bind DNA and is required to modulate cardiac growth and development. May act via an interaction with SRF, leading to modulate the expression of SRF-dependent cardiac-specific genes and cardiac development. May act as a co-chaperone for HSPA1A and HSPA1B chaperone proteins and assist in chaperone-mediated protein refolding. This Gallus gallus (Chicken) protein is Homeodomain-only protein (HOPX).